A 341-amino-acid chain; its full sequence is Eukaryotic translation initiation factor 3 subunit I (341 aa).

5 WD repeats span residues 8–49 (GHER…GTYH), 50–91 (GHQG…HTWE), 145–184 (CDESKATVAGWSYLAKYIIAGHEDGSVSQYDAKNGDQLHS), 189–228 (DMGSEIRDLQWSQDRTYFITASKDKTAKLVTARDLEVLKT), and 286–325 (GHFGPLNYVAAEPNGKGYASGGEDGYVRVHQFDKGYFDFM).

The protein belongs to the eIF-3 subunit I family. Component of the eukaryotic translation initiation factor 3 (eIF-3) complex.

The protein resides in the cytoplasm. Its function is as follows. Component of the eukaryotic translation initiation factor 3 (eIF-3) complex, which is involved in protein synthesis of a specialized repertoire of mRNAs and, together with other initiation factors, stimulates binding of mRNA and methionyl-tRNAi to the 40S ribosome. The eIF-3 complex specifically targets and initiates translation of a subset of mRNAs involved in cell proliferation. In Pyricularia oryzae (strain 70-15 / ATCC MYA-4617 / FGSC 8958) (Rice blast fungus), this protein is Eukaryotic translation initiation factor 3 subunit I.